A 487-amino-acid polypeptide reads, in one-letter code: 3-octaprenyl-4-hydroxybenzoate carboxy-lyase (487 aa).

N172 provides a ligand contact to Mn(2+). Prenylated FMN contacts are provided by residues 175–177 (IYR), 189–191 (RWL), and 194–195 (RG). E238 contacts Mn(2+). D287 (proton donor) is an active-site residue.

The protein belongs to the UbiD family. Homohexamer. Prenylated FMN is required as a cofactor. Mn(2+) serves as cofactor.

The protein localises to the cell membrane. The catalysed reaction is a 4-hydroxy-3-(all-trans-polyprenyl)benzoate + H(+) = a 2-(all-trans-polyprenyl)phenol + CO2. It functions in the pathway cofactor biosynthesis; ubiquinone biosynthesis. Functionally, catalyzes the decarboxylation of 3-octaprenyl-4-hydroxy benzoate to 2-octaprenylphenol, an intermediate step in ubiquinone biosynthesis. This is 3-octaprenyl-4-hydroxybenzoate carboxy-lyase from Actinobacillus pleuropneumoniae serotype 3 (strain JL03).